The following is a 254-amino-acid chain: Methyl-CpG-binding domain-containing protein 11 (254 aa).

In terms of domain architecture, MBD spans 4 to 74; it reads EEEVVSVELP…AEFDWTTSGT (71 aa). Positions 56 to 254 are disordered; it reads KSHPGNPAIA…EKTAEGEATG (199 aa). Basic and acidic residues-rich tracts occupy residues 80 to 97, 107 to 130, 151 to 162, and 178 to 254; these read RISE…EPPK, SKKD…KDTE, ETERVNDAKENI, and ESMK…EATG. Serine 116 bears the Phosphoserine mark.

Expressed in leaves (around hydathodes), buds, flowers (carpels and pollen grains), stems (around nodes), siliques, mature seeds and roots.

Its subcellular location is the nucleus. Its function is as follows. Transcriptional regulator that binds DNA independently of its methylation status. Required during plant organogenesis and development. This Arabidopsis thaliana (Mouse-ear cress) protein is Methyl-CpG-binding domain-containing protein 11 (MBD11).